Consider the following 187-residue polypeptide: Elongation factor P (187 aa).

This sequence belongs to the elongation factor P family.

It is found in the cytoplasm. It functions in the pathway protein biosynthesis; polypeptide chain elongation. Its function is as follows. Involved in peptide bond synthesis. Stimulates efficient translation and peptide-bond synthesis on native or reconstituted 70S ribosomes in vitro. Probably functions indirectly by altering the affinity of the ribosome for aminoacyl-tRNA, thus increasing their reactivity as acceptors for peptidyl transferase. The sequence is that of Elongation factor P from Desulfatibacillum aliphaticivorans.